We begin with the raw amino-acid sequence, 578 residues long: Proline--tRNA ligase (578 aa).

Belongs to the class-II aminoacyl-tRNA synthetase family. ProS type 1 subfamily. Homodimer.

It is found in the cytoplasm. The enzyme catalyses tRNA(Pro) + L-proline + ATP = L-prolyl-tRNA(Pro) + AMP + diphosphate. Catalyzes the attachment of proline to tRNA(Pro) in a two-step reaction: proline is first activated by ATP to form Pro-AMP and then transferred to the acceptor end of tRNA(Pro). As ProRS can inadvertently accommodate and process non-cognate amino acids such as alanine and cysteine, to avoid such errors it has two additional distinct editing activities against alanine. One activity is designated as 'pretransfer' editing and involves the tRNA(Pro)-independent hydrolysis of activated Ala-AMP. The other activity is designated 'posttransfer' editing and involves deacylation of mischarged Ala-tRNA(Pro). The misacylated Cys-tRNA(Pro) is not edited by ProRS. The chain is Proline--tRNA ligase from Burkholderia orbicola (strain AU 1054).